Consider the following 238-residue polypeptide: Dephospho-CoA kinase (238 aa).

A DPCK domain is found at 3–233 (IIGLTGGVGT…QRPFASPPRA (231 aa)). 11 to 16 (GTGKST) contacts ATP. 2 disordered regions span residues 110 to 129 (HGVP…VGFS) and 219 to 238 (LASA…YSDG).

This sequence belongs to the CoaE family.

It localises to the cytoplasm. The catalysed reaction is 3'-dephospho-CoA + ATP = ADP + CoA + H(+). It participates in cofactor biosynthesis; coenzyme A biosynthesis; CoA from (R)-pantothenate: step 5/5. Functionally, catalyzes the phosphorylation of the 3'-hydroxyl group of dephosphocoenzyme A to form coenzyme A. The chain is Dephospho-CoA kinase from Synechococcus sp. (strain JA-2-3B'a(2-13)) (Cyanobacteria bacterium Yellowstone B-Prime).